The following is an 893-amino-acid chain: DNA mismatch repair protein MutS (893 aa).

An ATP-binding site is contributed by 637 to 644; that stretch reads GPNMGGKS.

It belongs to the DNA mismatch repair MutS family.

Its function is as follows. This protein is involved in the repair of mismatches in DNA. It is possible that it carries out the mismatch recognition step. This protein has a weak ATPase activity. The sequence is that of DNA mismatch repair protein MutS from Burkholderia thailandensis (strain ATCC 700388 / DSM 13276 / CCUG 48851 / CIP 106301 / E264).